We begin with the raw amino-acid sequence, 194 residues long: FMN-dependent NADH:quinone oxidoreductase (194 aa).

FMN contacts are provided by residues S10 and 90 to 93 (MYNL).

This sequence belongs to the azoreductase type 1 family. In terms of assembly, homodimer. FMN is required as a cofactor.

It catalyses the reaction 2 a quinone + NADH + H(+) = 2 a 1,4-benzosemiquinone + NAD(+). It carries out the reaction N,N-dimethyl-1,4-phenylenediamine + anthranilate + 2 NAD(+) = 2-(4-dimethylaminophenyl)diazenylbenzoate + 2 NADH + 2 H(+). Its function is as follows. Quinone reductase that provides resistance to thiol-specific stress caused by electrophilic quinones. Also exhibits azoreductase activity. Catalyzes the reductive cleavage of the azo bond in aromatic azo compounds to the corresponding amines. In Haemophilus influenzae (strain ATCC 51907 / DSM 11121 / KW20 / Rd), this protein is FMN-dependent NADH:quinone oxidoreductase.